A 405-amino-acid chain; its full sequence is uncharacterized protein (405 aa).

The next 12 helical transmembrane spans lie at 19-39, 47-67, 85-105, 107-127, 156-176, 178-198, 224-244, 252-272, 283-303, 309-329, 344-364, and 366-386; these read IVSI…PLAV, VMGF…FATL, IVVF…TAGL, ASLP…LGIG, GIVT…FYHW, GLQA…LLAI, GMAL…ITLF, GAAF…LLFP, VAMI…VATM, IGVL…GVVA, TYTV…GLVM, and WAGV…ALLL.

Belongs to the major facilitator superfamily. YhhS family.

The protein resides in the cell inner membrane. This is an uncharacterized protein from Shigella flexneri.